Reading from the N-terminus, the 97-residue chain is Nucleoid-associated protein HPAG1_0033 (97 aa).

This sequence belongs to the YbaB/EbfC family. In terms of assembly, homodimer.

It localises to the cytoplasm. It is found in the nucleoid. Its function is as follows. Binds to DNA and alters its conformation. May be involved in regulation of gene expression, nucleoid organization and DNA protection. In Helicobacter pylori (strain HPAG1), this protein is Nucleoid-associated protein HPAG1_0033.